The following is a 298-amino-acid chain: Acetyl-coenzyme A carboxylase carboxyl transferase subunit beta 1 (298 aa).

The 269-residue stretch at 26–294 (MWVKCPSCGD…RAADVQNAPA (269 aa)) folds into the CoA carboxyltransferase N-terminal domain. Zn(2+) is bound by residues Cys-30, Cys-33, Cys-49, and Cys-51. The C4-type zinc-finger motif lies at 30-51 (CPSCGDLIYTRQFSDNLKVCKC).

The protein belongs to the AccD/PCCB family. Acetyl-CoA carboxylase is a heterohexamer composed of biotin carboxyl carrier protein (AccB), biotin carboxylase (AccC) and two subunits each of ACCase subunit alpha (AccA) and ACCase subunit beta (AccD). Zn(2+) is required as a cofactor.

The protein resides in the cytoplasm. It carries out the reaction N(6)-carboxybiotinyl-L-lysyl-[protein] + acetyl-CoA = N(6)-biotinyl-L-lysyl-[protein] + malonyl-CoA. The protein operates within lipid metabolism; malonyl-CoA biosynthesis; malonyl-CoA from acetyl-CoA: step 1/1. Its function is as follows. Component of the acetyl coenzyme A carboxylase (ACC) complex. Biotin carboxylase (BC) catalyzes the carboxylation of biotin on its carrier protein (BCCP) and then the CO(2) group is transferred by the transcarboxylase to acetyl-CoA to form malonyl-CoA. In Roseiflexus castenholzii (strain DSM 13941 / HLO8), this protein is Acetyl-coenzyme A carboxylase carboxyl transferase subunit beta 1.